The chain runs to 163 residues: Nucleotide-binding protein GK0742 (163 aa).

It belongs to the YajQ family.

In terms of biological role, nucleotide-binding protein. This is Nucleotide-binding protein GK0742 from Geobacillus kaustophilus (strain HTA426).